The sequence spans 935 residues: Potassium channel AKT1 (935 aa).

Residues methionine 1–threonine 106 lie on the Cytoplasmic side of the membrane. Residues phenylalanine 107 to proline 127 traverse the membrane as a helical segment. At lysine 128–alanine 136 the chain is on the extracellular side. The helical transmembrane segment at aspartate 137–leucine 157 threads the bilayer. The Cytoplasmic portion of the chain corresponds to aspartate 158–threonine 178. Residues tryptophan 179 to serine 199 form a helical membrane-spanning segment. Topologically, residues lysine 200–glycine 205 are extracellular. The chain crosses the membrane as a helical; Voltage-sensor span at residues phenylalanine 206 to glutamate 226. Residues lysine 227 to lysine 240 lie on the Cytoplasmic side of the membrane. A helical transmembrane segment spans residues leucine 241–aspartate 261. The Extracellular portion of the chain corresponds to arginine 262 to valine 288. Residues threonine 289–alanine 308 constitute an intramembrane region (pore-forming). The Extracellular segment spans residues glutamate 309–arginine 312. The helical transmembrane segment at glutamate 313–glycine 333 threads the bilayer. The Cytoplasmic segment spans residues asparagine 334–serine 935. Leucine 419–phenylalanine 538 lines the a nucleoside 3',5'-cyclic phosphate pocket. ANK repeat units lie at residues aspartate 565–glutamate 594, aspartate 598–alanine 627, glutamate 631–serine 660, aspartate 662–arginine 691, aspartate 695–lysine 724, and asparagine 728–serine 757. The segment at serine 826–arginine 854 is disordered. Over residues glycine 845 to arginine 854 the composition is skewed to polar residues. One can recognise a KHA domain in the interval arginine 859–serine 935.

It belongs to the potassium channel family. Plant (TC 1.A.1.4) subfamily. In terms of assembly, the potassium channel is probably a homo- or heterotetrameric complex of pore-forming subunits. Expressed in roots and coleoptile of young seedlings.

It is found in the membrane. In terms of biological role, highly selective inward-rectifying potassium channel that mediates potassium uptake by plant roots. Assuming opened or closed conformations in response to the voltage difference across the membrane, the channel is activated by hyperpolarization. May be a major salt-sensitive potassium channel in roots. This is Potassium channel AKT1 (AKT1) from Oryza sativa subsp. japonica (Rice).